Consider the following 645-residue polypeptide: Protein disulfide-isomerase A4 (645 aa).

The N-terminal stretch at 1 to 20 is a signal peptide; it reads MRPRKAFLLLLLLGLVQLLA. Thioredoxin domains are found at residues 21–169 and 158–301; these read VAGA…EVSQ and EEIV…EFLK. Positions 24–58 are disordered; the sequence is AEGPDEDSSNRENAIEDEEEEEEEDDDEEEDDLEV. Residues 38-58 are compositionally biased toward acidic residues; that stretch reads IEDEEEEEEEDDDEEEDDLEV. The CXXC motif lies at 91–94; that stretch reads CGHC. 2 disulfide bridges follow: Cys-91–Cys-94 and Cys-206–Cys-209. The residue at position 366 (Lys-366) is an N6-acetyllysine. In terms of domain architecture, Thioredoxin 3 spans 505 to 636; that stretch reads FKKGKLKPVI…LSKFIEEHAT (132 aa). The CXXC signature appears at 555-558; sequence CGHC. Cysteines 555 and 558 form a disulfide. The Prevents secretion from ER signature appears at 642–645; sequence KEEL.

Belongs to the protein disulfide isomerase family. Part of a large chaperone multiprotein complex comprising DNAJB11, HSP90B1, HSPA5, HYOU, PDIA2, PDIA4, PDIA6, PPIB, SDF2L1, UGGT1 and very small amounts of ERP29, but not, or at very low levels, CALR nor CANX. Component of a complex containing at least CRELD2, MANF, MATN3 and PDIA4. In terms of assembly, (Microbial infection) Interacts with Human astrovirus-1 and Human astrovirus-8 spike protein VP25; this interaction seems to facilitate the uncoating during virus entry into the cell. Does not interact with Human astrovirus-2 spike protein VP25.

It localises to the endoplasmic reticulum lumen. It is found in the melanosome. It carries out the reaction Catalyzes the rearrangement of -S-S- bonds in proteins.. The protein is Protein disulfide-isomerase A4 (PDIA4) of Homo sapiens (Human).